A 778-amino-acid chain; its full sequence is Probable cation-transporting ATPase exp7 (778 aa).

The Cytoplasmic portion of the chain corresponds to 1 to 37; that stretch reads MDKNKIMGLTQREVKERQAEGLVNDFTASASTSTWQI. A helical transmembrane segment spans residues 38-57; sequence VKRNVFTLFNALNFAIALAL. Over 58–64 the chain is Extracellular; the sequence is AFVQAWS. A helical transmembrane segment spans residues 65-84; the sequence is NLVFFAVICFNAFSGIVTEL. The Cytoplasmic segment spans residues 85 to 209; the sequence is RAKHMVDKLN…PINSRIMKSL (125 aa). Residues 210–229 traverse the membrane as a helical segment; the sequence is DKLAGFTGKIIIPFGLALLL. Residues 230 to 242 are Extracellular-facing; it reads EALLLKGLPLKSS. The chain crosses the membrane as a helical span at residues 243-260; it reads VVNSSTALLGMLPKGIAL. The Cytoplasmic segment spans residues 261 to 586; the sequence is LTITSLLTAV…FEGRRVVNNI (326 aa). The active-site 4-aspartylphosphate intermediate is the Asp-298. Asp-532 and Asp-536 together coordinate Mg(2+). A helical transmembrane segment spans residues 587-606; that stretch reads AHIAPIFLIKTIYSFLLAVI. At 607–624 the chain is on the extracellular side; that stretch reads CIASALLGRSEWILIFPF. A helical transmembrane segment spans residues 625 to 645; the sequence is IPIQITMIDQFVEGFPPFVLT. At 646–663 the chain is on the cytoplasmic side; that stretch reads FERNIKPVEQNFLRKSML. The chain crosses the membrane as a helical span at residues 664–684; the sequence is RALPSALMVVFSVLFVKMFGA. Over 685–689 the chain is Extracellular; that stretch reads SQGWS. A helical transmembrane segment spans residues 690–708; the sequence is ELEISTLLYYLLGSIGFLS. At 709–716 the chain is on the cytoplasmic side; that stretch reads VFRACMPF. The chain crosses the membrane as a helical span at residues 717-739; it reads TLWRVLLIVWSVGGFLATALFPR. Topologically, residues 740–757 are extracellular; it reads IQKLLEISTLTEQTLPVY. The chain crosses the membrane as a helical span at residues 758 to 777; it reads GVMMLVFTVIFILTSRYQAK. Position 778 (Lys-778) is a topological domain, cytoplasmic.

Belongs to the cation transport ATPase (P-type) (TC 3.A.3) family.

It localises to the cell membrane. It carries out the reaction ATP + H2O = ADP + phosphate + H(+). This chain is Probable cation-transporting ATPase exp7 (exp7), found in Streptococcus pneumoniae serotype 4 (strain ATCC BAA-334 / TIGR4).